The primary structure comprises 404 residues: Argininosuccinate synthase (404 aa).

Residues 10-18 (AFSGGLDTS) and Ala37 contribute to the ATP site. The L-citrulline site is built by Tyr88 and Ser93. Gly118 provides a ligand contact to ATP. L-aspartate-binding residues include Thr120, Asn124, and Asp125. Asn124 contributes to the L-citrulline binding site. L-citrulline-binding residues include Arg128, Ser179, Ser188, Glu264, and Tyr276.

This sequence belongs to the argininosuccinate synthase family. Type 1 subfamily. As to quaternary structure, homotetramer.

Its subcellular location is the cytoplasm. It catalyses the reaction L-citrulline + L-aspartate + ATP = 2-(N(omega)-L-arginino)succinate + AMP + diphosphate + H(+). It functions in the pathway amino-acid biosynthesis; L-arginine biosynthesis; L-arginine from L-ornithine and carbamoyl phosphate: step 2/3. This is Argininosuccinate synthase from Nitrosomonas europaea (strain ATCC 19718 / CIP 103999 / KCTC 2705 / NBRC 14298).